The sequence spans 211 residues: Endoplasmic reticulum vesicle protein 25 (211 aa).

The signal sequence occupies residues 1 to 19 (MKSIVSVLTLLLLINAVAA). Residues 20–180 (LRFVLPAKDK…TNESTNRRVK (161 aa)) lie on the Lumenal side of the membrane. Residues 33-121 (PFCVRDFVKN…TKEIDLSVAI (89 aa)) form the GOLD domain. Residues 181 to 201 (FFSVGITLALIALGVWQIIYL) form a helical membrane-spanning segment. The Cytoplasmic portion of the chain corresponds to 202–211 (RSYFRSKHII).

This sequence belongs to the EMP24/GP25L family.

Its subcellular location is the endoplasmic reticulum membrane. The protein localises to the golgi apparatus membrane. Its function is as follows. Constituent of COPII-coated endoplasmic reticulum-derived transport vesicles. Required for efficient transport of a subset of secretory proteins to the Golgi. Facilitates retrograde transport from the Golgi to the endoplasmic reticulum. This Yarrowia lipolytica (strain CLIB 122 / E 150) (Yeast) protein is Endoplasmic reticulum vesicle protein 25 (ERV25).